Consider the following 152-residue polypeptide: Sec-independent protein translocase protein TatB (152 aa).

The helical transmembrane segment at 1–21 (MFGISFSELLLVGLVALLVLG) threads the bilayer. Residues 98-115 (HAPGAATVAEAPPASEVP) show a composition bias toward low complexity. The interval 98 to 152 (HAPGAATVAEAPPASEVPAPLPSTPAPAPTAEPAAPVATPATTAPHDSTLPPRAP) is disordered. Residues 116-127 (APLPSTPAPAPT) are compositionally biased toward pro residues. Positions 128–142 (AEPAAPVATPATTAP) are enriched in low complexity.

Belongs to the TatB family. In terms of assembly, the Tat system comprises two distinct complexes: a TatABC complex, containing multiple copies of TatA, TatB and TatC subunits, and a separate TatA complex, containing only TatA subunits. Substrates initially bind to the TatABC complex, which probably triggers association of the separate TatA complex to form the active translocon.

The protein localises to the cell inner membrane. Part of the twin-arginine translocation (Tat) system that transports large folded proteins containing a characteristic twin-arginine motif in their signal peptide across membranes. Together with TatC, TatB is part of a receptor directly interacting with Tat signal peptides. TatB may form an oligomeric binding site that transiently accommodates folded Tat precursor proteins before their translocation. The protein is Sec-independent protein translocase protein TatB of Pseudomonas fluorescens (strain ATCC BAA-477 / NRRL B-23932 / Pf-5).